The sequence spans 2183 residues: RNA replication polyprotein (2183 aa).

Residues 63-256 form the Alphavirus-like MT domain; that stretch reads SPHSYRPHSH…YIQPVAGSYL (194 aa). A Fe2OG dioxygenase domain is found at 762 to 853; the sequence is FYNQCLVQEY…RISLTFRLTK (92 aa). Residues His-780, Asp-782, and His-835 each coordinate Fe cation. A 2-oxoglutarate-binding site is contributed by Arg-844. The disordered stretch occupies residues 883–910; it reads ERRSHQSGGRPAVELEGHEREKVNSDSS. Residues 895 to 906 are compositionally biased toward basic and acidic residues; sequence VELEGHEREKVN. The OTU domain occupies 1091 to 1199; it reads FHSFDVEADG…DNHFKPCMPV (109 aa). A Peptidase C23 domain is found at 1198-1288; that stretch reads PVNGCVIRAI…LEKEHLAHIP (91 aa). Catalysis depends on residues Cys-1202 and His-1283. One can recognise a (+)RNA virus helicase ATP-binding domain in the interval 1349 to 1520; sequence KEAQKDLASK…SGRSYKFNIL (172 aa). 1374-1381 is a binding site for ATP; it reads GTFGCGKS. The region spanning 1521–1667 is the (+)RNA virus helicase C-terminal domain; it reads SQRFRNPVFY…TKRACNDDII (147 aa). Residues 1961–2068 enclose the RdRp catalytic domain; sequence GVCTESDYEA…NSRLKVTNRF (108 aa).

The protein belongs to the potexviruses/carlaviruses RNA replication protein family. Fe(2+) serves as cofactor. Specific enzymatic cleavages by the viral protease yield mature proteins.

It catalyses the reaction ATP + H2O = ADP + phosphate + H(+). It carries out the reaction RNA(n) + a ribonucleoside 5'-triphosphate = RNA(n+1) + diphosphate. RNA-directed RNA polymerase involved in viral RNA replication. Its function is as follows. Protease: Thiol protease that cleaves the polyprotein. The polypeptide is RNA replication polyprotein (Apple stem pitting virus (isolate PA66) (ASPV)).